The following is a 1323-amino-acid chain: Sister chromatid cohesion protein PDS5 homolog A-B (1323 aa).

Residues 385–421 (FLVNDQLLGFVRERTLDKRWRVRKEAMMGLAQLYKKY) form an HEAT repeat. A disordered region spans residues 1138–1323 (PLNATGRRPY…TAQRQIDLHR (186 aa)). Residues 1153–1165 (SEISNNVSINSES) show a composition bias toward low complexity. Composition is skewed to polar residues over residues 1166-1176 (DASVANRQSSE) and 1210-1220 (LDQTAPSNTGT). Residues 1235-1246 (NIRKESEEKKVD) are compositionally biased toward basic and acidic residues.

As to quaternary structure, interacts with the cohesin complex. Binds chromatin in a cohesin-dependent manner.

It is found in the nucleus. In terms of biological role, may regulate sister chromatid cohesion during mitosis and couple it to DNA replication. This is Sister chromatid cohesion protein PDS5 homolog A-B (pds5a-b) from Xenopus laevis (African clawed frog).